The sequence spans 861 residues: MKKDVTPMMRQYLSIKNKHKDAILFFRVGSFYEMFFDDALEGSKLLGLTLTKREDIPMCGVPCHTSKEYIKKLILLDRKVAICEQGGVQTDPKGPLEREVVEVISPGVVVDEDFLQDDVNNYLVAISDYKDYYSFSYIDLSTSRLGIILYEGSFLEKLRRDIEKYSPKEIIVSESFYYKYLEKLALDRFLVNKVPHWHLDKDIAIKSLKDHFNVLSLSAFGFKEDEPYYISSFLIIDYIKNNLKNLLINIDTIYINSDSEYMFLDDVTQINLELVKNNNDLTARYSLYSVLNDCKTPMGKRLLREYILNPLLDIAAINNRLDHVEFLNNNVNLSIKLREILSNVWDIERIISRLQMRKYAKKDFLFIRETLIAFFSVKRLLNEYSFNYWIFDVNDEGDIRGIYSLIDCAISNEQDELIKQGYNSEIDRLRELKNNASKYVDDYLDFERNFSKINSLKIKRINVRGLFFEVTKSYYGQVPSHFIESQTLNSVKRYKTNKLIELERDINDAEDNLLSLEQEIFDEIALKVVKYSTVIKKVAEFCAYIDVVSNFAYLAKKNEYVRPTLTNNKEIILECARHPVVEHYMKGVEAFTRNSVRIDGEKYFCLITGPNMAGKSTYLRQTALVVLMGHIGSFVPANKAIIGITDKIFCRIGASDNISKGESTFLVEMNETANILRNATQDSLIIMDEVGRGTSTNDGLAIACSIVEYILEDIKARSLFATHFHELSAINHDSFVNLSMKIERQGNELIFLREVEEKPSLNSYGIYVARIAGIPLKVIKRANIILKSLTSRENLCVSEFFTSATSVVNDGEDTMEEDLSYELDLNAYLELKNLISKIDINNITPFQAMNLLSEIILKTKM.

Residue 609 to 616 (GPNMAGKS) participates in ATP binding.

This sequence belongs to the DNA mismatch repair MutS family.

This protein is involved in the repair of mismatches in DNA. It is possible that it carries out the mismatch recognition step. This protein has a weak ATPase activity. The sequence is that of DNA mismatch repair protein MutS from Borrelia hermsii (strain HS1 / DAH).